The chain runs to 349 residues: Glycosyltransferase 8 domain-containing protein 2 (349 aa).

Over 1 to 6 (MALLRK) the chain is Cytoplasmic. A helical; Signal-anchor for type II membrane protein membrane pass occupies residues 7–24 (INQVLLFLLIVTLCVILY). Topologically, residues 25-349 (KKVHKGTVPK…AGIFKLNHHS (325 aa)) are lumenal. N-linked (GlcNAc...) asparagine glycosylation is present at asparagine 234.

This sequence belongs to the glycosyltransferase 8 family.

Its subcellular location is the membrane. This is Glycosyltransferase 8 domain-containing protein 2 (GLT8D2) from Homo sapiens (Human).